The following is a 417-amino-acid chain: MTNPEDIPSRIEGKNVARLVCCFLGVGSLVAWNAMLTITDYYYQLFPKYHPSRVLTIVYQLVANVFIITLATKEAKLNTRLRNIFGYSLYTAGTFCLIILDLASHGSGSVVAYVLLCLIVALFGLADAFVQGAMVGDLSFMSPDFIQAFMAGLGIAGALTSVLRLITKAIFDNSPDGLRKGALLFIGIATLIELACVFLYTLVFAKLPIVKYYRAKAGKEGAKTVSADLAAAGLQEQAEQVHQMDESKIQKLTKKQLLRENIDLGINLSLIYVVTLSIFPGFLYENTGEHRLGDWYAPVLVAMYNGWDAISRFIPSIKPLAMESRKWITVCVVARLLLVPAFYFTAKYADQGWMLFLTSFLGLSNGYLTVCIFSTAPKGYNGPEANALGNLMCVFLLGGIFAGVCLGWLWLIGNDSF.

The next 11 helical transmembrane spans lie at 19–39 (LVCCFLGVGSLVAWNAMLTIT), 54–74 (VLTIVYQLVANVFIITLATKE), 84–104 (IFGYSLYTAGTFCLIILDLAS), 110–130 (VVAYVLLCLIVALFGLADAFV), 143–163 (PDFIQAFMAGLGIAGALTSVL), 184–204 (LFIGIATLIELACVFLYTLVF), 264–284 (LGINLSLIYVVTLSIFPGFLY), 293–315 (GDWYAPVLVAMYNGWDAISRFIP), 326–346 (KWITVCVVARLLLVPAFYFTA), 353–373 (WMLFLTSFLGLSNGYLTVCIF), and 392–412 (MCVFLLGGIFAGVCLGWLWLI).

Belongs to the SLC29A/ENT transporter (TC 2.A.57) family. In terms of tissue distribution, expressed in leaves and flowers.

It localises to the cell membrane. Nucleoside transporter that can mediate uptake of adenosine, uridine, guanosine or cytidine when expressed in a heterologous system (yeast). This is Equilibrative nucleotide transporter 7 (ENT7) from Arabidopsis thaliana (Mouse-ear cress).